A 199-amino-acid chain; its full sequence is 7-methyl-GTP pyrophosphatase (199 aa).

Aspartate 76 serves as the catalytic Proton acceptor.

Belongs to the Maf family. YceF subfamily. A divalent metal cation is required as a cofactor.

The protein localises to the cytoplasm. It catalyses the reaction N(7)-methyl-GTP + H2O = N(7)-methyl-GMP + diphosphate + H(+). In terms of biological role, nucleoside triphosphate pyrophosphatase that hydrolyzes 7-methyl-GTP (m(7)GTP). May have a dual role in cell division arrest and in preventing the incorporation of modified nucleotides into cellular nucleic acids. In Hahella chejuensis (strain KCTC 2396), this protein is 7-methyl-GTP pyrophosphatase.